We begin with the raw amino-acid sequence, 225 residues long: Pyridoxine/pyridoxamine 5'-phosphate oxidase (225 aa).

Residues 21–24 (RKSY) and lysine 79 each bind substrate. FMN-binding positions include 74–79 (RVVLIK), 89–90 (YT), arginine 95, and lysine 96. Residues tyrosine 136, arginine 140, and serine 144 each contribute to the substrate site. FMN contacts are provided by residues 153–154 (QS) and tryptophan 197. 203-205 (RLH) serves as a coordination point for substrate. Residue arginine 207 participates in FMN binding.

It belongs to the pyridoxamine 5'-phosphate oxidase family. Homodimer. Requires FMN as cofactor.

It carries out the reaction pyridoxamine 5'-phosphate + O2 + H2O = pyridoxal 5'-phosphate + H2O2 + NH4(+). The enzyme catalyses pyridoxine 5'-phosphate + O2 = pyridoxal 5'-phosphate + H2O2. It functions in the pathway cofactor metabolism; pyridoxal 5'-phosphate salvage; pyridoxal 5'-phosphate from pyridoxamine 5'-phosphate: step 1/1. Its pathway is cofactor metabolism; pyridoxal 5'-phosphate salvage; pyridoxal 5'-phosphate from pyridoxine 5'-phosphate: step 1/1. Its function is as follows. Catalyzes the oxidation of either pyridoxine 5'-phosphate (PNP) or pyridoxamine 5'-phosphate (PMP) into pyridoxal 5'-phosphate (PLP). The polypeptide is Pyridoxine/pyridoxamine 5'-phosphate oxidase (Paracidovorax citrulli (strain AAC00-1) (Acidovorax citrulli)).